The chain runs to 402 residues: Nicotinate phosphoribosyltransferase (402 aa).

Residue histidine 224 is modified to Phosphohistidine; by autocatalysis.

The protein belongs to the NAPRTase family. In terms of processing, transiently phosphorylated on a His residue during the reaction cycle. Phosphorylation strongly increases the affinity for substrates and increases the rate of nicotinate D-ribonucleotide production. Dephosphorylation regenerates the low-affinity form of the enzyme, leading to product release.

The enzyme catalyses nicotinate + 5-phospho-alpha-D-ribose 1-diphosphate + ATP + H2O = nicotinate beta-D-ribonucleotide + ADP + phosphate + diphosphate. The protein operates within cofactor biosynthesis; NAD(+) biosynthesis; nicotinate D-ribonucleotide from nicotinate: step 1/1. Its function is as follows. Catalyzes the synthesis of beta-nicotinate D-ribonucleotide from nicotinate and 5-phospho-D-ribose 1-phosphate at the expense of ATP. The chain is Nicotinate phosphoribosyltransferase from Neisseria gonorrhoeae (strain ATCC 700825 / FA 1090).